Consider the following 365-residue polypeptide: WAT1-related protein At4g01430 (365 aa).

The next 10 membrane-spanning stretches (helical) occupy residues 7–27, 39–59, 76–96, 100–120, 132–152, 183–203, 216–236, 250–270, 280–300, and 305–325; these read WAPV…NALV, IFGA…SYIW, FISG…GLSY, TVSM…ALIF, AGVL…LLTF, WLLG…WMLF, YSST…LSLY, FVIL…TVVT, VFVS…DFLI, and LYLG…VFLW. Residues 20-151 enclose the EamA 1 domain; the sequence is MGSVNALVKK…ICIMGAMLLT (132 aa). The EamA 2 domain occupies 216-324; the sequence is YSSTCLMSVF…VTITGLYVFL (109 aa). The segment at 339 to 365 is disordered; that stretch reads LNSSQFSQNKDNEDHTIANHKDTNLPV. Residues 348 to 365 show a composition bias toward basic and acidic residues; it reads KDNEDHTIANHKDTNLPV.

It belongs to the drug/metabolite transporter (DMT) superfamily. Plant drug/metabolite exporter (P-DME) (TC 2.A.7.4) family.

The protein resides in the membrane. This Arabidopsis thaliana (Mouse-ear cress) protein is WAT1-related protein At4g01430.